Reading from the N-terminus, the 156-residue chain is MNNAVKLNSIFTKLSKKKKPKLLGRGIGCGKGKTSGRGHKGQKARSGVSINGFEGGQQSIYTRLPKRGFKPIRRSIYSIINVGDIQRLMEAKKIVKDSVIDKERLYKLGFIKSIKDKIKLLNKGKLSEKFVFHVDFASEAAKKSVASVGGSVEILS.

A disordered region spans residues 25-48 (RGIGCGKGKTSGRGHKGQKARSGV). Residues 34 to 43 (TSGRGHKGQK) show a composition bias toward basic residues.

The protein belongs to the universal ribosomal protein uL15 family. Part of the 50S ribosomal subunit.

Binds to the 23S rRNA. This chain is Large ribosomal subunit protein uL15, found in Wolbachia pipientis wMel.